A 304-amino-acid chain; its full sequence is uncharacterized protein (304 aa).

This sequence belongs to the histone deacetylase family.

In terms of biological role, putative deacetylase. This is an uncharacterized protein from Synechocystis sp. (strain ATCC 27184 / PCC 6803 / Kazusa).